The following is a 329-amino-acid chain: DNA-directed RNA polymerase subunit alpha (329 aa).

The alpha N-terminal domain (alpha-NTD) stretch occupies residues 1 to 235 (MQNSIIGFLK…EQLEAFVDLR (235 aa)). The tract at residues 249 to 329 (FEPILLRPVD…KWPPSSILEE (81 aa)) is alpha C-terminal domain (alpha-CTD).

It belongs to the RNA polymerase alpha chain family. As to quaternary structure, homodimer. The RNAP catalytic core consists of 2 alpha, 1 beta, 1 beta' and 1 omega subunit. When a sigma factor is associated with the core the holoenzyme is formed, which can initiate transcription.

The enzyme catalyses RNA(n) + a ribonucleoside 5'-triphosphate = RNA(n+1) + diphosphate. DNA-dependent RNA polymerase catalyzes the transcription of DNA into RNA using the four ribonucleoside triphosphates as substrates. The chain is DNA-directed RNA polymerase subunit alpha from Buchnera aphidicola subsp. Schizaphis graminum (strain Sg).